Consider the following 190-residue polypeptide: GTP cyclohydrolase 1 (190 aa).

Positions 75, 78, and 146 each coordinate Zn(2+).

The protein belongs to the GTP cyclohydrolase I family. In terms of assembly, toroid-shaped homodecamer, composed of two pentamers of five dimers.

It catalyses the reaction GTP + H2O = 7,8-dihydroneopterin 3'-triphosphate + formate + H(+). It functions in the pathway cofactor biosynthesis; 7,8-dihydroneopterin triphosphate biosynthesis; 7,8-dihydroneopterin triphosphate from GTP: step 1/1. This Campylobacter jejuni (strain RM1221) protein is GTP cyclohydrolase 1.